The sequence spans 257 residues: Hydroxyethylthiazole kinase (257 aa).

Met-49 is a binding site for substrate. The ATP site is built by Arg-124 and Thr-170. Residue Gly-197 participates in substrate binding.

Belongs to the Thz kinase family. The cofactor is Mg(2+).

It catalyses the reaction 5-(2-hydroxyethyl)-4-methylthiazole + ATP = 4-methyl-5-(2-phosphooxyethyl)-thiazole + ADP + H(+). Its pathway is cofactor biosynthesis; thiamine diphosphate biosynthesis; 4-methyl-5-(2-phosphoethyl)-thiazole from 5-(2-hydroxyethyl)-4-methylthiazole: step 1/1. Catalyzes the phosphorylation of the hydroxyl group of 4-methyl-5-beta-hydroxyethylthiazole (THZ). The chain is Hydroxyethylthiazole kinase from Klebsiella pneumoniae subsp. pneumoniae (strain ATCC 700721 / MGH 78578).